Here is a 391-residue protein sequence, read N- to C-terminus: Pepsin B (391 aa).

An N-terminal signal peptide occupies residues 1–16 (MKCLILALICLQLSEG). Residues 17–60 (LVVRQILHKGKSIRERMEENGVLEDFLRYNKKADPAAKFLFNKD) constitute a propeptide, activation peptide. The Peptidase A1 domain maps to 75 to 388 (YFGEISIGTP…DMANNRVGFA (314 aa)). The active site involves Asp93. 2 disulfides stabilise this stretch: Cys106–Cys111 and Cys270–Cys274. The active site involves Asp279. Cys313 and Cys346 are oxidised to a cystine.

The protein belongs to the peptidase A1 family.

It is found in the secreted. The enzyme catalyses Degradation of gelatin, little activity on hemoglobin. Specificity on B chain of insulin more restricted than that of pepsin A. Does not cleave 1-Phe-|-Val-2, 4-Gln-|-His-5 or 23-Gly-|-Phe-24.. In terms of biological role, hydrolyzes various peptides including beta-endorphin, insulin B chain, dynorphin A, and neurokinin A, with high specificity for the cleavage of the Phe-Xaa bonds. The chain is Pepsin B from Monodelphis domestica (Gray short-tailed opossum).